A 320-amino-acid chain; its full sequence is Probable serine proteinase inhibitor 1 (320 aa).

Belongs to the serpin family. Poxviruses subfamily.

This Swinepox virus (strain Kasza) (SWPV) protein is Probable serine proteinase inhibitor 1 (SPI-1).